A 172-amino-acid chain; its full sequence is Melanocortin-2 receptor accessory protein (172 aa).

The chain crosses the membrane as a helical span at residues 38-58 (IVIAFWVSLAAFVVLLFLILL). Disordered regions lie at residues 105 to 130 (QAQA…SSST) and 152 to 172 (PLVR…QLQS).

Belongs to the MRAP family. Homodimer and heterodimer. Forms antiparallel homodimers and heterodimers with MRAP2. Interacts with MC1R, MC2R, MC3R, MC4R and MC5R.

The protein localises to the cell membrane. It localises to the endoplasmic reticulum membrane. Its function is as follows. Modulator of melanocortin receptors (MC1R, MC2R, MC3R, MC4R and MC5R). Acts by increasing ligand-sensitivity of melanocortin receptors and enhancing generation of cAMP by the receptors. Required both for MC2R trafficking to the cell surface of adrenal cells and for signaling in response to corticotropin (ACTH). May be involved in the intracellular trafficking pathways in adipocyte cells. This Pan troglodytes (Chimpanzee) protein is Melanocortin-2 receptor accessory protein (MRAP).